Reading from the N-terminus, the 64-residue chain is Large ribosomal subunit protein bL33 (64 aa).

Composition is skewed to basic and acidic residues over residues 16–25 (EARTSSDPKR) and 33–42 (TTEKNRRNTT). A disordered region spans residues 16-42 (EARTSSDPKRSNGVSRYTTEKNRRNTT).

It belongs to the bacterial ribosomal protein bL33 family.

This Prochlorococcus marinus (strain MIT 9301) protein is Large ribosomal subunit protein bL33.